Consider the following 159-residue polypeptide: SsrA-binding protein (159 aa).

The interval 131–159 is disordered; it reads KGKKLHDKRESEKERDWNRQKSRLLKDNG. A compositionally biased stretch (basic and acidic residues) spans 137–159; sequence DKRESEKERDWNRQKSRLLKDNG.

It belongs to the SmpB family.

The protein localises to the cytoplasm. Its function is as follows. Required for rescue of stalled ribosomes mediated by trans-translation. Binds to transfer-messenger RNA (tmRNA), required for stable association of tmRNA with ribosomes. tmRNA and SmpB together mimic tRNA shape, replacing the anticodon stem-loop with SmpB. tmRNA is encoded by the ssrA gene; the 2 termini fold to resemble tRNA(Ala) and it encodes a 'tag peptide', a short internal open reading frame. During trans-translation Ala-aminoacylated tmRNA acts like a tRNA, entering the A-site of stalled ribosomes, displacing the stalled mRNA. The ribosome then switches to translate the ORF on the tmRNA; the nascent peptide is terminated with the 'tag peptide' encoded by the tmRNA and targeted for degradation. The ribosome is freed to recommence translation, which seems to be the essential function of trans-translation. This Rhizobium etli (strain CIAT 652) protein is SsrA-binding protein.